Here is a 129-residue protein sequence, read N- to C-terminus: Small ribosomal subunit protein uS11 (129 aa).

It belongs to the universal ribosomal protein uS11 family. Part of the 30S ribosomal subunit. Interacts with proteins S7 and S18. Binds to IF-3.

Located on the platform of the 30S subunit, it bridges several disparate RNA helices of the 16S rRNA. Forms part of the Shine-Dalgarno cleft in the 70S ribosome. The chain is Small ribosomal subunit protein uS11 from Cereibacter sphaeroides (strain ATCC 17025 / ATH 2.4.3) (Rhodobacter sphaeroides).